We begin with the raw amino-acid sequence, 334 residues long: Ornithine carbamoyltransferase, catabolic (334 aa).

Carbamoyl phosphate is bound by residues 57–60, Q84, R108, and 135–138; these read STRT and HPTQ. L-ornithine is bound by residues N168, D232, and 236–237; that span reads SM. Residues 274-275 and R320 each bind carbamoyl phosphate; that span reads CL.

The protein belongs to the aspartate/ornithine carbamoyltransferase superfamily. OTCase family.

It is found in the cytoplasm. The enzyme catalyses carbamoyl phosphate + L-ornithine = L-citrulline + phosphate + H(+). It participates in amino-acid degradation; L-arginine degradation via ADI pathway; carbamoyl phosphate from L-arginine: step 2/2. Functionally, reversibly catalyzes the transfer of the carbamoyl group from carbamoyl phosphate (CP) to the N(epsilon) atom of ornithine (ORN) to produce L-citrulline. This chain is Ornithine carbamoyltransferase, catabolic (arcB), found in Rhizobium meliloti (strain 1021) (Ensifer meliloti).